The primary structure comprises 312 residues: Glyoxylate/hydroxypyruvate reductase A (312 aa).

Arginine 227 is a catalytic residue. The Proton donor role is filled by histidine 275.

Belongs to the D-isomer specific 2-hydroxyacid dehydrogenase family. GhrA subfamily.

It localises to the cytoplasm. The catalysed reaction is glycolate + NADP(+) = glyoxylate + NADPH + H(+). It carries out the reaction (R)-glycerate + NAD(+) = 3-hydroxypyruvate + NADH + H(+). The enzyme catalyses (R)-glycerate + NADP(+) = 3-hydroxypyruvate + NADPH + H(+). In terms of biological role, catalyzes the NADPH-dependent reduction of glyoxylate and hydroxypyruvate into glycolate and glycerate, respectively. This is Glyoxylate/hydroxypyruvate reductase A from Escherichia coli O7:K1 (strain IAI39 / ExPEC).